Here is a 536-residue protein sequence, read N- to C-terminus: Atrial natriuretic peptide receptor 3 (536 aa).

A signal peptide spans 1–26 (MRSLLLFTFSACVLLARVLLAGGASS). The propeptide occupies 27 to 40 (GAGDTRPGSRRRAR). Topologically, residues 41-478 (EALAAQKIEV…KSSGGLEESA (438 aa)) are extracellular. N-linked (GlcNAc...) asparagine glycosylation is present at Asn-81. The chloride site is built by Ser-101, Val-130, and Cys-131. 2 disulfides stabilise this stretch: Cys-103/Cys-131 and Cys-208/Cys-256. 2 N-linked (GlcNAc...) asparagine glycosylation sites follow: Asn-288 and Asn-389. Residues 479-499 (VTGIVVGALLGAGLLMAFYFF) form a helical membrane-spanning segment. At 500–536 (RKKYRITIERRNQQEESNIGKHRELREDSIRSHFSVA) the chain is on the cytoplasmic side.

It belongs to the ANF receptor family. Homodimer; disulfide-linked. Interacts with OSTN.

The protein localises to the cell membrane. Its function is as follows. Receptor for the natriuretic peptide hormones, binding with similar affinities atrial natriuretic peptide NPPA/ANP, brain natriuretic peptide NPPB/BNP, and C-type natriuretic peptide NPPC/CNP. May function as a clearance receptor for NPPA, NPPB and NPPC, regulating their local concentrations and effects. Acts as a regulator of osteoblast differentiation and bone growth by binding to its ligand osteocrin, thereby preventing binding between NPR3/NPR-C and natriuretic peptides, leading to increase cGMP production. The sequence is that of Atrial natriuretic peptide receptor 3 (Npr3) from Mus musculus (Mouse).